The sequence spans 366 residues: Reticulon-4-interacting protein 1, mitochondrial (366 aa).

Residues 1 to 20 (MIEKMILRRFFSTKSSTMRA) constitute a mitochondrion transit peptide.

It belongs to the zinc-containing alcohol dehydrogenase family. Quinone oxidoreductase subfamily. In terms of tissue distribution, expressed in pharynx, muscles and intestine.

The protein localises to the mitochondrion. In terms of biological role, plays a role in oxygen metabolism in the mitochondria by regulating the levels of reactive oxygen species (ROS) thereby conferring resistance to oxidative stress. Involved in resistance to P.aeruginosa PA14 infection. Regulates lifespan. The sequence is that of Reticulon-4-interacting protein 1, mitochondrial from Caenorhabditis elegans.